The primary structure comprises 326 residues: Probable cell division protein WhiA (326 aa).

The H-T-H motif DNA-binding region spans 275–308 (SLEELGQLAEPPMTKDAVAGRIRRLLAMADKRAR).

Belongs to the WhiA family.

Functionally, involved in cell division and chromosome segregation. In Saccharopolyspora erythraea (strain ATCC 11635 / DSM 40517 / JCM 4748 / NBRC 13426 / NCIMB 8594 / NRRL 2338), this protein is Probable cell division protein WhiA.